The chain runs to 392 residues: Acetyl-CoA acetyltransferase (392 aa).

Residue Cys85 is the Acyl-thioester intermediate of the active site. CoA-binding residues include Cys206, Ser207, Val209, and Lys332. His336 serves as the catalytic Proton acceptor.

Belongs to the thiolase-like superfamily. Thiolase family. In terms of assembly, interacts with HMG-CoA synthase (HMGCS) that catalyzes the second step in the pathway and with a DUF35 protein. The acetoacetyl-CoA thiolase/HMG-CoA synthase complex channels the intermediate via a fused CoA-binding site, which allows for efficient coupling of the endergonic thiolase reaction with the exergonic HMGCS reaction.

It carries out the reaction 2 acetyl-CoA = acetoacetyl-CoA + CoA. It participates in metabolic intermediate biosynthesis; (R)-mevalonate biosynthesis; (R)-mevalonate from acetyl-CoA: step 1/3. In terms of biological role, catalyzes the condensation of two acetyl-coA molecules into acetoacetyl-CoA. Functions in the mevalonate (MVA) pathway leading to isopentenyl diphosphate (IPP), a key precursor for the biosynthesis of isoprenoid compounds that are building blocks of archaeal membrane lipids. This chain is Acetyl-CoA acetyltransferase, found in Methanothermococcus thermolithotrophicus (Methanococcus thermolithotrophicus).